Reading from the N-terminus, the 281-residue chain is DegV domain-containing protein SCO2569 (281 aa).

One can recognise a DegV domain in the interval 5–280; it reads VAIVTDSTAY…PGLLGVVVSS (276 aa). Hexadecanoate-binding residues include threonine 62 and serine 95.

In terms of biological role, may bind long-chain fatty acids, such as palmitate, and may play a role in lipid transport or fatty acid metabolism. The sequence is that of DegV domain-containing protein SCO2569 from Streptomyces coelicolor (strain ATCC BAA-471 / A3(2) / M145).